The sequence spans 312 residues: DNA-directed RNA polymerase subunit alpha (312 aa).

The tract at residues 1 to 226 (MIEFEKPIIT…EHLNLFTDLT (226 aa)) is alpha N-terminal domain (alpha-NTD). The tract at residues 243–312 (DEKVLDRTIE…DLGLGLKNDK (70 aa)) is alpha C-terminal domain (alpha-CTD).

This sequence belongs to the RNA polymerase alpha chain family. As to quaternary structure, homodimer. The RNAP catalytic core consists of 2 alpha, 1 beta, 1 beta' and 1 omega subunit. When a sigma factor is associated with the core the holoenzyme is formed, which can initiate transcription.

It catalyses the reaction RNA(n) + a ribonucleoside 5'-triphosphate = RNA(n+1) + diphosphate. Its function is as follows. DNA-dependent RNA polymerase catalyzes the transcription of DNA into RNA using the four ribonucleoside triphosphates as substrates. In Streptococcus mutans serotype c (strain ATCC 700610 / UA159), this protein is DNA-directed RNA polymerase subunit alpha.